The primary structure comprises 672 residues: tRNA(Met) cytidine acetyltransferase TmcA (672 aa).

ATP contacts are provided by residues glutamine 180, 202–211, and arginine 319; that span reads GRGKSALAGQ. The region spanning 349–531 is the N-acetyltransferase domain; the sequence is IEISAFYQQA…SGCYTAMALL (183 aa). Acetyl-CoA is bound by residues 461–463, 468–474, and arginine 506; these read IAV and QREGIGQ.

Belongs to the RNA cytidine acetyltransferase family. TmcA subfamily.

Its subcellular location is the cytoplasm. It catalyses the reaction cytidine(34) in elongator tRNA(Met) + acetyl-CoA + ATP + H2O = N(4)-acetylcytidine(34) in elongator tRNA(Met) + ADP + phosphate + CoA + H(+). In terms of biological role, catalyzes the formation of N(4)-acetylcytidine (ac(4)C) at the wobble position of tRNA(Met), by using acetyl-CoA as an acetyl donor and ATP (or GTP). The sequence is that of tRNA(Met) cytidine acetyltransferase TmcA from Salmonella typhimurium (strain LT2 / SGSC1412 / ATCC 700720).